The primary structure comprises 414 residues: Dihydroorotase (414 aa).

Zn(2+) is bound by residues H57 and H59. Substrate is bound by residues 59–61 (HLR) and N91. K135, H164, H204, and D272 together coordinate Zn(2+). K135 carries the N6-carboxylysine modification. D272 is an active-site residue. Substrate-binding positions include H276 and 286-287 (AG).

Belongs to the metallo-dependent hydrolases superfamily. DHOase family. Class I DHOase subfamily. Requires Zn(2+) as cofactor.

It catalyses the reaction (S)-dihydroorotate + H2O = N-carbamoyl-L-aspartate + H(+). The protein operates within pyrimidine metabolism; UMP biosynthesis via de novo pathway; (S)-dihydroorotate from bicarbonate: step 3/3. In terms of biological role, catalyzes the reversible cyclization of carbamoyl aspartate to dihydroorotate. In Pyrococcus furiosus (strain ATCC 43587 / DSM 3638 / JCM 8422 / Vc1), this protein is Dihydroorotase.